We begin with the raw amino-acid sequence, 457 residues long: Cysteine--tRNA ligase (457 aa).

Residue Cys-27 participates in Zn(2+) binding. A 'HIGH' region motif is present at residues Pro-29–Asn-39. The Zn(2+) site is built by Cys-211, His-236, and Glu-240. A 'KMSKS' region motif is present at residues Lys-269–Ser-273. Residue Lys-272 participates in ATP binding.

It belongs to the class-I aminoacyl-tRNA synthetase family. Monomer. Requires Zn(2+) as cofactor.

It localises to the cytoplasm. The enzyme catalyses tRNA(Cys) + L-cysteine + ATP = L-cysteinyl-tRNA(Cys) + AMP + diphosphate. The protein is Cysteine--tRNA ligase of Ehrlichia ruminantium (strain Welgevonden).